Here is a 284-residue protein sequence, read N- to C-terminus: Bifunctional protein FolD (284 aa).

NADP(+) contacts are provided by residues 165–167 and Ser190; that span reads GRS.

Belongs to the tetrahydrofolate dehydrogenase/cyclohydrolase family. As to quaternary structure, homodimer.

The enzyme catalyses (6R)-5,10-methylene-5,6,7,8-tetrahydrofolate + NADP(+) = (6R)-5,10-methenyltetrahydrofolate + NADPH. It carries out the reaction (6R)-5,10-methenyltetrahydrofolate + H2O = (6R)-10-formyltetrahydrofolate + H(+). It functions in the pathway one-carbon metabolism; tetrahydrofolate interconversion. In terms of biological role, catalyzes the oxidation of 5,10-methylenetetrahydrofolate to 5,10-methenyltetrahydrofolate and then the hydrolysis of 5,10-methenyltetrahydrofolate to 10-formyltetrahydrofolate. The protein is Bifunctional protein FolD of Streptococcus sanguinis (strain SK36).